The following is a 251-amino-acid chain: E3 ubiquitin-protein ligase Os06g0535400 (251 aa).

3 helical membrane passes run 28-48 (VVAA…YCFA), 102-122 (LANR…IVVF), and 127-147 (ADVV…VWLS). Residues 185–227 (CCVCLAGMREAQALRDLPRCGHRFHAKCIGKWLTAHPTCPVCR) form an RING-type; atypical zinc finger.

It is found in the membrane. The catalysed reaction is S-ubiquitinyl-[E2 ubiquitin-conjugating enzyme]-L-cysteine + [acceptor protein]-L-lysine = [E2 ubiquitin-conjugating enzyme]-L-cysteine + N(6)-ubiquitinyl-[acceptor protein]-L-lysine.. It participates in protein modification; protein ubiquitination. Possesses E3 ubiquitin-protein ligase in vitro. This is E3 ubiquitin-protein ligase Os06g0535400 from Oryza sativa subsp. japonica (Rice).